Reading from the N-terminus, the 586-residue chain is Aspartate--tRNA ligase (586 aa).

An L-aspartate-binding site is contributed by glutamate 171. The tract at residues 195–198 is aspartate; that stretch reads QLFK. Arginine 217 is a binding site for L-aspartate. ATP-binding positions include 217–219 and glutamine 226; that span reads RDE. Histidine 448 lines the L-aspartate pocket. Residue glutamate 482 coordinates ATP. Arginine 489 serves as a coordination point for L-aspartate. An ATP-binding site is contributed by 534–537; sequence GLDR.

This sequence belongs to the class-II aminoacyl-tRNA synthetase family. Type 1 subfamily. In terms of assembly, homodimer.

The protein localises to the cytoplasm. The enzyme catalyses tRNA(Asp) + L-aspartate + ATP = L-aspartyl-tRNA(Asp) + AMP + diphosphate. Catalyzes the attachment of L-aspartate to tRNA(Asp) in a two-step reaction: L-aspartate is first activated by ATP to form Asp-AMP and then transferred to the acceptor end of tRNA(Asp). In Buchnera aphidicola subsp. Acyrthosiphon pisum (strain APS) (Acyrthosiphon pisum symbiotic bacterium), this protein is Aspartate--tRNA ligase.